The sequence spans 269 residues: Cytochrome c oxidase subunit 3 (269 aa).

Residues 1 to 22 (MTNLIRSNFQDHPFHLVSPSPW) lie on the Mitochondrial matrix side of the membrane. Residues 23-41 (PLNTSVCLLNLTTTGALSM) form a helical membrane-spanning segment. Residues 42 to 48 (HNFNNIH) are Mitochondrial intermembrane-facing. Residues 49–73 (YLYYIALIGLVSAMFLWFRDIISEG) traverse the membrane as a helical segment. At 74-80 (TFLGDHT) the chain is on the mitochondrial matrix side. Residues 81-114 (LAVQRGLNLGIILFIVSEALFFLAIFWAFFHSAL) traverse the membrane as a helical segment. At 115 to 137 (TPTVELGAQWPPIGIEPVNPFEL) the chain is on the mitochondrial intermembrane side. A helical membrane pass occupies residues 138-161 (PLLNTVILLSSGATITYAHHALIK). Over 162–164 (GER) the chain is Mitochondrial matrix. The chain crosses the membrane as a helical span at residues 165-188 (EGALYGSIATILLAIIFTGFQGVE). The Mitochondrial intermembrane portion of the chain corresponds to 189-201 (YSVSSFTISDGAF). A helical membrane pass occupies residues 202-230 (GTCFFFSTGFHGIHVIIGTIFLAVALWRI). Over 231-248 (FAYHLTDNHHVGFEGGIL) the chain is Mitochondrial matrix. A helical membrane pass occupies residues 249-265 (YWHFVDVVWLFLYISVY). The Mitochondrial intermembrane segment spans residues 266–269 (YWGS).

It belongs to the cytochrome c oxidase subunit 3 family. As to quaternary structure, component of the cytochrome c oxidase (complex IV, CIV), a multisubunit enzyme composed of 11 subunits. The complex is composed of a catalytic core of 3 subunits Cox1, Cox2 and Cox3, encoded in the mitochondrial DNA, and 8 supernumerary subunits Cox4, Cox5a/Cox5, Cox6, Cox7, Cox8, Cox7a/Cox9, Cox6b/Cox12 and Cox6a/Cox13, which are encoded in the nuclear genome. The complex exists as a monomer or a dimer and forms respiratory supercomplexes (SCs) in the inner mitochondrial membrane with NADH-ubiquinone oxidoreductase (complex I, CI) and ubiquinol-cytochrome c oxidoreductase (cytochrome b-c1 complex, complex III, CIII), resulting in various different assemblies (supercomplexes I(1)IV(1), I(1)III(3)IV(2), III(2)IV(1) and III(2)IV(2) as well as larger supercomplexes of compositions like I(1)III(2)IV(5-6)).

It localises to the mitochondrion inner membrane. The enzyme catalyses 4 Fe(II)-[cytochrome c] + O2 + 8 H(+)(in) = 4 Fe(III)-[cytochrome c] + 2 H2O + 4 H(+)(out). In terms of biological role, component of the cytochrome c oxidase, the last enzyme in the mitochondrial electron transport chain which drives oxidative phosphorylation. The respiratory chain contains 3 multisubunit complexes succinate dehydrogenase (complex II, CII), ubiquinol-cytochrome c oxidoreductase (cytochrome b-c1 complex, complex III, CIII) and cytochrome c oxidase (complex IV, CIV), that cooperate to transfer electrons derived from NADH and succinate to molecular oxygen, creating an electrochemical gradient over the inner membrane that drives transmembrane transport and the ATP synthase. Cytochrome c oxidase is the component of the respiratory chain that catalyzes the reduction of oxygen to water. Electrons originating from reduced cytochrome c in the intermembrane space (IMS) are transferred via the dinuclear copper A center (CU(A)) of Cox2 and heme A of Cox1 to the active site in Cox1, a binuclear center (BNC) formed by heme A3 and copper B (CU(B)). The BNC reduces molecular oxygen to 2 water molecules using 4 electrons from cytochrome c in the IMS and 4 protons from the mitochondrial matrix. The protein is Cytochrome c oxidase subunit 3 (cox-3) of Neurospora crassa (strain ATCC 24698 / 74-OR23-1A / CBS 708.71 / DSM 1257 / FGSC 987).